Reading from the N-terminus, the 174-residue chain is Large ribosomal subunit protein uL10 (174 aa).

The protein belongs to the universal ribosomal protein uL10 family. Part of the ribosomal stalk of the 50S ribosomal subunit. The N-terminus interacts with L11 and the large rRNA to form the base of the stalk. The C-terminus forms an elongated spine to which L12 dimers bind in a sequential fashion forming a multimeric L10(L12)X complex.

In terms of biological role, forms part of the ribosomal stalk, playing a central role in the interaction of the ribosome with GTP-bound translation factors. The sequence is that of Large ribosomal subunit protein uL10 from Anaeromyxobacter dehalogenans (strain 2CP-C).